The chain runs to 796 residues: Exocyst complex component 3 (796 aa).

Residues proline 87–leucine 174 adopt a coiled-coil conformation.

Belongs to the SEC6 family. As to quaternary structure, the exocyst complex is composed of sec-3/exoc1, sec-5/exoc2, sec-6/exoc3, sec-8/exoc4, sec-10/exoc5, sec-15/exoc6, exo-70/exoc7 and exo-84/exoc8.

Component of the exocyst complex involved in the docking of exocytic vesicles with fusion sites on the plasma membrane. The sequence is that of Exocyst complex component 3 (sec-6) from Caenorhabditis elegans.